The sequence spans 133 residues: ATP synthase epsilon chain, chloroplastic (133 aa).

It belongs to the ATPase epsilon chain family. F-type ATPases have 2 components, CF(1) - the catalytic core - and CF(0) - the membrane proton channel. CF(1) has five subunits: alpha(3), beta(3), gamma(1), delta(1), epsilon(1). CF(0) has three main subunits: a, b and c.

Its subcellular location is the plastid. The protein resides in the chloroplast thylakoid membrane. Produces ATP from ADP in the presence of a proton gradient across the membrane. The sequence is that of ATP synthase epsilon chain, chloroplastic from Eucalyptus globulus subsp. globulus (Tasmanian blue gum).